Consider the following 438-residue polypeptide: Putative F-box/FBD/LRR-repeat protein At2g05300 (438 aa).

Residues 13 to 59 form the F-box domain; that stretch reads EDRISQLPDPLLTQILNLLPTEEAVKTSVLSTRWRTLWLWVPNLELS. LRR repeat units follow at residues 135–166, 167–192, 235–261, and 318–346; these read CDSLVSLRLYRLSLVDAEFVSLPCLKILRLKD, IVFHNETTFERLVSSCPVLEELKIDV, CLIIDDSVSESFVVTDLESNAKFDISL, and YVTLNASELEWFPIFLRSSPNLKSLILER. The region spanning 362 to 409 is the FBD domain; the sequence is SMSSVPECLLTSLEFVEFKAPICGLGPEMMLVWYFLKNSPTLKKLTLP.

The sequence is that of Putative F-box/FBD/LRR-repeat protein At2g05300 from Arabidopsis thaliana (Mouse-ear cress).